We begin with the raw amino-acid sequence, 170 residues long: MAVVISIHRPYVTLTISKNRNPLKPHRQFNESCLRFDHLPRNTKNQLRCLSAKSTPSKPDPASPQDGEELESVGVKAALAMLRFYKREISPVLPRSCRYVPTCSEYSMEAYKKYGVLKGTVLTTWRLCRCNPLGGSGFDPPRWFGESGIKLREGDEEEEDNYDDEDQRKI.

2 disordered regions span residues Cys-49 to Leu-70 and Ser-147 to Ile-170. Over residues Gly-154–Ile-170 the composition is skewed to acidic residues.

It belongs to the UPF0161 family.

The sequence is that of UPF0161 protein At3g09310 from Arabidopsis thaliana (Mouse-ear cress).